We begin with the raw amino-acid sequence, 404 residues long: Ubiquitin-like modifier-activating enzyme 5 (404 aa).

ATP-binding residues include glycine 83, aspartate 104, lysine 127, asparagine 150, and asparagine 184. 2 residues coordinate Zn(2+): cysteine 226 and cysteine 229. Catalysis depends on cysteine 250, which acts as the Glycyl thioester intermediate. Zn(2+) is bound by residues cysteine 303 and cysteine 308. Positions 372-404 are disordered; sequence APEKSSETSEETVSAATADETSLEDLMAQMKSM. The span at 382–391 shows a compositional bias: low complexity; sequence ETVSAATADE.

It belongs to the ubiquitin-activating E1 family. UBA5 subfamily. Interacts (via C-terminus) with Ufc1. Interacts with Ufm1.

It localises to the cytoplasm. The protein resides in the nucleus. It is found in the golgi apparatus. E1-like enzyme which activates UFM1. The protein is Ubiquitin-like modifier-activating enzyme 5 of Drosophila melanogaster (Fruit fly).